The chain runs to 352 residues: Phospho-N-acetylmuramoyl-pentapeptide-transferase (352 aa).

10 consecutive transmembrane segments (helical) span residues 16-36 (YITF…LLFM), 66-86 (TPTM…LLCA), 88-108 (LNNL…LIGL), 129-149 (MLYL…FGME), 160-180 (PLLS…VATS), 191-211 (GLAT…VYIA), 228-248 (SGEA…FLWF), 255-275 (LFMG…MAII), 280-300 (FLLF…ILQI), and 329-349 (KIIV…LLTL).

This sequence belongs to the glycosyltransferase 4 family. MraY subfamily. It depends on Mg(2+) as a cofactor.

The protein localises to the cell inner membrane. The enzyme catalyses UDP-N-acetyl-alpha-D-muramoyl-L-alanyl-gamma-D-glutamyl-meso-2,6-diaminopimeloyl-D-alanyl-D-alanine + di-trans,octa-cis-undecaprenyl phosphate = di-trans,octa-cis-undecaprenyl diphospho-N-acetyl-alpha-D-muramoyl-L-alanyl-D-glutamyl-meso-2,6-diaminopimeloyl-D-alanyl-D-alanine + UMP. Its pathway is cell wall biogenesis; peptidoglycan biosynthesis. Its function is as follows. Catalyzes the initial step of the lipid cycle reactions in the biosynthesis of the cell wall peptidoglycan: transfers peptidoglycan precursor phospho-MurNAc-pentapeptide from UDP-MurNAc-pentapeptide onto the lipid carrier undecaprenyl phosphate, yielding undecaprenyl-pyrophosphoryl-MurNAc-pentapeptide, known as lipid I. The sequence is that of Phospho-N-acetylmuramoyl-pentapeptide-transferase from Wolinella succinogenes (strain ATCC 29543 / DSM 1740 / CCUG 13145 / JCM 31913 / LMG 7466 / NCTC 11488 / FDC 602W) (Vibrio succinogenes).